The primary structure comprises 531 residues: 2-isopropylmalate synthase (531 aa).

The region spanning 8–284 is the Pyruvate carboxyltransferase domain; it reads IIIFDTTLRD…LTNIDTKQIY (277 aa). Residues D17, H208, H210, and N244 each coordinate Mn(2+). The interval 408 to 531 is regulatory domain; the sequence is RVELVQVSCG…TQDKQTEVTA (124 aa).

This sequence belongs to the alpha-IPM synthase/homocitrate synthase family. LeuA type 1 subfamily. Homodimer. Mn(2+) is required as a cofactor.

The protein resides in the cytoplasm. The catalysed reaction is 3-methyl-2-oxobutanoate + acetyl-CoA + H2O = (2S)-2-isopropylmalate + CoA + H(+). The protein operates within amino-acid biosynthesis; L-leucine biosynthesis; L-leucine from 3-methyl-2-oxobutanoate: step 1/4. Functionally, catalyzes the condensation of the acetyl group of acetyl-CoA with 3-methyl-2-oxobutanoate (2-ketoisovalerate) to form 3-carboxy-3-hydroxy-4-methylpentanoate (2-isopropylmalate). The sequence is that of 2-isopropylmalate synthase from Nostoc sp. (strain PCC 7120 / SAG 25.82 / UTEX 2576).